A 224-amino-acid chain; its full sequence is 7-cyano-7-deazaguanine synthase (224 aa).

10-20 is an ATP binding site; the sequence is FSGGQDSTTCL. Positions 193, 201, 204, and 207 each coordinate Zn(2+).

It belongs to the QueC family. It depends on Zn(2+) as a cofactor.

It catalyses the reaction 7-carboxy-7-deazaguanine + NH4(+) + ATP = 7-cyano-7-deazaguanine + ADP + phosphate + H2O + H(+). It participates in purine metabolism; 7-cyano-7-deazaguanine biosynthesis. In terms of biological role, catalyzes the ATP-dependent conversion of 7-carboxy-7-deazaguanine (CDG) to 7-cyano-7-deazaguanine (preQ(0)). This Neisseria gonorrhoeae (strain ATCC 700825 / FA 1090) protein is 7-cyano-7-deazaguanine synthase.